The primary structure comprises 350 residues: tRNA dimethylallyltransferase (350 aa).

The interval 1 to 20 is disordered; the sequence is MMNTERPAGPLRPPHPPHPP. Residues 10–20 are compositionally biased toward pro residues; it reads PLRPPHPPHPP. Position 27–34 (27–34) interacts with ATP; it reads GPTASGKT. Residue 29 to 34 coordinates substrate; sequence TASGKT. Interaction with substrate tRNA regions lie at residues 52 to 55, 176 to 180, and 273 to 278; these read DSAL, QRIAR, and RCVGYR.

The protein belongs to the IPP transferase family. In terms of assembly, monomer. Requires Mg(2+) as cofactor.

The enzyme catalyses adenosine(37) in tRNA + dimethylallyl diphosphate = N(6)-dimethylallyladenosine(37) in tRNA + diphosphate. Its function is as follows. Catalyzes the transfer of a dimethylallyl group onto the adenine at position 37 in tRNAs that read codons beginning with uridine, leading to the formation of N6-(dimethylallyl)adenosine (i(6)A). This Albidiferax ferrireducens (strain ATCC BAA-621 / DSM 15236 / T118) (Rhodoferax ferrireducens) protein is tRNA dimethylallyltransferase.